Here is a 157-residue protein sequence, read N- to C-terminus: Phosphopantetheine adenylyltransferase (157 aa).

Threonine 8 contacts substrate. ATP is bound by residues 8 to 9 and histidine 16; that span reads TF. Substrate-binding residues include lysine 40, threonine 72, and arginine 86. ATP is bound by residues 87–89, glutamate 97, and 122–128; these read GLR and YSFLSSS.

Belongs to the bacterial CoaD family. In terms of assembly, homohexamer. Mg(2+) serves as cofactor.

It localises to the cytoplasm. It carries out the reaction (R)-4'-phosphopantetheine + ATP + H(+) = 3'-dephospho-CoA + diphosphate. It functions in the pathway cofactor biosynthesis; coenzyme A biosynthesis; CoA from (R)-pantothenate: step 4/5. Its function is as follows. Reversibly transfers an adenylyl group from ATP to 4'-phosphopantetheine, yielding dephospho-CoA (dPCoA) and pyrophosphate. This is Phosphopantetheine adenylyltransferase from Prochlorococcus marinus (strain MIT 9215).